Here is a 242-residue protein sequence, read N- to C-terminus: Ditrans,polycis-undecaprenyl-diphosphate synthase ((2E,6E)-farnesyl-diphosphate specific) (242 aa).

The active site involves D21. A Mg(2+)-binding site is contributed by D21. Substrate contacts are provided by residues 22–25 (GNGR), W26, R34, H38, and 66–68 (SSE). N69 acts as the Proton acceptor in catalysis. Substrate-binding positions include W70, R72, R189, and 195–197 (RIS). Residue E208 coordinates Mg(2+).

This sequence belongs to the UPP synthase family. In terms of assembly, homodimer. Mg(2+) is required as a cofactor.

It carries out the reaction 8 isopentenyl diphosphate + (2E,6E)-farnesyl diphosphate = di-trans,octa-cis-undecaprenyl diphosphate + 8 diphosphate. Catalyzes the sequential condensation of isopentenyl diphosphate (IPP) with (2E,6E)-farnesyl diphosphate (E,E-FPP) to yield (2Z,6Z,10Z,14Z,18Z,22Z,26Z,30Z,34E,38E)-undecaprenyl diphosphate (di-trans,octa-cis-UPP). UPP is the precursor of glycosyl carrier lipid in the biosynthesis of bacterial cell wall polysaccharide components such as peptidoglycan and lipopolysaccharide. In Haemophilus ducreyi (strain 35000HP / ATCC 700724), this protein is Ditrans,polycis-undecaprenyl-diphosphate synthase ((2E,6E)-farnesyl-diphosphate specific).